We begin with the raw amino-acid sequence, 389 residues long: Succinate--CoA ligase [ADP-forming] subunit beta (389 aa).

The ATP-grasp domain maps to 9–244 (KQLFEHYGLP…LTQNDAREAE (236 aa)). Residues lysine 46, 53 to 55 (GRG), glutamate 99, cysteine 102, and glutamate 107 contribute to the ATP site. The Mg(2+) site is built by asparagine 199 and aspartate 213. Substrate contacts are provided by residues asparagine 264 and 321–323 (GIV).

Belongs to the succinate/malate CoA ligase beta subunit family. In terms of assembly, heterotetramer of two alpha and two beta subunits. Requires Mg(2+) as cofactor.

It carries out the reaction succinate + ATP + CoA = succinyl-CoA + ADP + phosphate. The enzyme catalyses GTP + succinate + CoA = succinyl-CoA + GDP + phosphate. It functions in the pathway carbohydrate metabolism; tricarboxylic acid cycle; succinate from succinyl-CoA (ligase route): step 1/1. In terms of biological role, succinyl-CoA synthetase functions in the citric acid cycle (TCA), coupling the hydrolysis of succinyl-CoA to the synthesis of either ATP or GTP and thus represents the only step of substrate-level phosphorylation in the TCA. The beta subunit provides nucleotide specificity of the enzyme and binds the substrate succinate, while the binding sites for coenzyme A and phosphate are found in the alpha subunit. This Haemophilus influenzae (strain ATCC 51907 / DSM 11121 / KW20 / Rd) protein is Succinate--CoA ligase [ADP-forming] subunit beta.